The sequence spans 294 residues: Early 4 ORF6 protein (294 aa).

Positions 239–255 (ARRTRRLMLRAVRIIAE) match the Nuclear localization signal motif.

The protein belongs to the adenoviridae E4 30 to 34 kDa protein family. In terms of assembly, interacts with E1B-55k.

The protein resides in the host nucleus. It is found in the host cytoplasm. Its function is as follows. Plays a major role to prevent cellular inhibition of viral genome replication by nuclear bodies. Assembles an SCF-like E3 ubiquitin ligase complex based on the cellular proteins ELOB, ELOC, CUL5 and RBX1, in cooperation with viral E1B-55K. This viral RING-type ligase ubiquitinates cellular substrates prior to proteasomal degradation: p53/TP53, LIG4, MRE11-RAD50-NBS1 (MRN) complex, ITGA3, DAXX and BLM. This chain is Early 4 ORF6 protein, found in Homo sapiens (Human).